The following is a 572-amino-acid chain: Mitochondrial distribution and morphology protein 34 (572 aa).

The SMP-LTD domain occupies Met1–Leu195. 4 disordered regions span residues Thr212–Leu236, Gly355–Asp426, His487–Arg507, and Ala552–His572. Positions Arg358 to Arg370 are enriched in basic residues. Basic and acidic residues predominate over residues Val371–Asp381. A compositionally biased stretch (polar residues) spans Ser387–Ser400.

The protein belongs to the MDM34 family. In terms of assembly, component of the ER-mitochondria encounter structure (ERMES) or MDM complex, composed of mmm1, mdm10, mdm12 and mdm34.

The protein localises to the mitochondrion outer membrane. Functionally, component of the ERMES/MDM complex, which serves as a molecular tether to connect the endoplasmic reticulum (ER) and mitochondria. Components of this complex are involved in the control of mitochondrial shape and protein biogenesis, and function in nonvesicular lipid trafficking between the ER and mitochondria. Mdm34 is required for the interaction of the ER-resident membrane protein mmm1 and the outer mitochondrial membrane-resident beta-barrel protein mdm10. In Aspergillus fumigatus (strain ATCC MYA-4609 / CBS 101355 / FGSC A1100 / Af293) (Neosartorya fumigata), this protein is Mitochondrial distribution and morphology protein 34.